A 1034-amino-acid chain; its full sequence is Glycine dehydrogenase (decarboxylating), mitochondrial (1034 aa).

The N-terminal 63 residues, 1–63, are a transit peptide targeting the mitochondrion; it reads MERARRLAML…LNGFGSQVRT (63 aa). K770 carries the N6-(pyridoxal phosphate)lysine modification.

Belongs to the GcvP family. As to quaternary structure, homodimer. The glycine cleavage system is composed of four proteins: P, T, L and H. Pyridoxal 5'-phosphate serves as cofactor.

Its subcellular location is the mitochondrion. It carries out the reaction N(6)-[(R)-lipoyl]-L-lysyl-[glycine-cleavage complex H protein] + glycine + H(+) = N(6)-[(R)-S(8)-aminomethyldihydrolipoyl]-L-lysyl-[glycine-cleavage complex H protein] + CO2. Functionally, the glycine cleavage system catalyzes the degradation of glycine. The P protein binds the alpha-amino group of glycine through its pyridoxal phosphate cofactor; CO(2) is released and the remaining methylamine moiety is then transferred to the lipoamide cofactor of the H protein. The polypeptide is Glycine dehydrogenase (decarboxylating), mitochondrial (GDCSP) (Flaveria anomala (Yellowtops)).